A 462-amino-acid polypeptide reads, in one-letter code: ATP synthase subunit beta (462 aa).

Gly-151–Thr-158 contributes to the ATP binding site.

The protein belongs to the ATPase alpha/beta chains family. F-type ATPases have 2 components, CF(1) - the catalytic core - and CF(0) - the membrane proton channel. CF(1) has five subunits: alpha(3), beta(3), gamma(1), delta(1), epsilon(1). CF(0) has three main subunits: a(1), b(2) and c(9-12). The alpha and beta chains form an alternating ring which encloses part of the gamma chain. CF(1) is attached to CF(0) by a central stalk formed by the gamma and epsilon chains, while a peripheral stalk is formed by the delta and b chains.

Its subcellular location is the cell inner membrane. The enzyme catalyses ATP + H2O + 4 H(+)(in) = ADP + phosphate + 5 H(+)(out). Functionally, produces ATP from ADP in the presence of a proton gradient across the membrane. The catalytic sites are hosted primarily by the beta subunits. The protein is ATP synthase subunit beta of Chlorobaculum parvum (strain DSM 263 / NCIMB 8327) (Chlorobium vibrioforme subsp. thiosulfatophilum).